A 496-amino-acid polypeptide reads, in one-letter code: MERHEQILKEIAFLELRLQSLKLELEFVRSSGSEQKGKIEPFRPNSECSATPMQTAIGKESSNPLMAISLPKAEKKHSKASEVPSPHKTVKEFSEIPKDFLRPNQGIQIPKKNEDHSSSSSKEEKGIQNPKKDFYVVYNGPYAGIYDHWGTAKKATNKIPGVSYKKFKDMLSARTSADIYTNAQFGEKLKYIPGATTSPKSFAEALTTRPSNMKSLGKPKFIKIEEDDDVGFNPEFDLKSFLYIYKYGRNLEEEHFLTDRAFTIDKKEISYLNFVNNSDPEGILESFKAGLVRFIYPSTNLQELRLLPKVLKSSVQRFRKKCIKDSEKEIFLKIKSTIPCWEDYYNGLDDSVSYRPNYLVQIGISKGVNYQPSQKMEAVVLKEQWQGIAEEKAIEFFQAIEDILSNEKIFIIYCDDRILIYSSSPKERTKEDLMAILNFQSEVSSCKLLGFHSDKICSYLNKKASVGKPYSCPQKGKAVITSGPSFSVEDTLSDTE.

The tract at residues 102–128 (RPNQGIQIPKKNEDHSSSSSKEEKGIQ) is disordered. Basic and acidic residues predominate over residues 111–128 (KKNEDHSSSSSKEEKGIQ).

It belongs to the caulimoviridae viroplasmin family.

Its subcellular location is the host cytoplasm. Functionally, enhances the translation of downstream ORFs on polycistronic mRNAs derived from carnation etched ring virus. This chain is Transactivator/viroplasmin protein, found in Dianthus caryophyllus (Carnation).